We begin with the raw amino-acid sequence, 272 residues long: 2-amino-3,7-dideoxy-D-threo-hept-6-ulosonate synthase (272 aa).

The Proton acceptor role is filled by Asp-33. 1-deoxy-D-threo-hexo-2,5-diulose 6-phosphate contacts are provided by residues 33-37 and 153-155; these read DHGVS and YPR. The Proton donor role is filled by Tyr-153. Lys-184 (schiff-base intermediate with substrate) is an active-site residue. Residues 209 to 210 and 237 to 238 each bind 1-deoxy-D-threo-hexo-2,5-diulose 6-phosphate; these read GG and GR.

The protein belongs to the DeoC/FbaB aldolase family. ADHS subfamily. As to quaternary structure, homodecamer.

It carries out the reaction 1-deoxy-D-threo-hexo-2,5-diulose 6-phosphate + L-aspartate 4-semialdehyde = 2,3-dioxopropyl phosphate + 2-amino-2,3,7-trideoxy-D-lyxo-hept-6-ulosonate. Catalyzes a transaldol reaction between 6-deoxy-5-ketofructose 1-phosphate (DKFP) and L-aspartate semialdehyde (ASA) with an elimination of hydroxypyruvaldehyde phosphate to yield 2-amino-3,7-dideoxy-D-threo-hept-6-ulosonate (ADH). Plays a key role in an alternative pathway of the biosynthesis of 3-dehydroquinate (DHQ), which is involved in the canonical pathway for the biosynthesis of aromatic amino acids. The sequence is that of 2-amino-3,7-dideoxy-D-threo-hept-6-ulosonate synthase from Methanococcus maripaludis (strain C7 / ATCC BAA-1331).